Here is a 492-residue protein sequence, read N- to C-terminus: Spore germination protein GerLA (492 aa).

The next 3 membrane-spanning stretches (helical) occupy residues 295–315, 384–404, and 410–430; these read IIAVLLPAMYVALVSYHQGLI, FLVIIIAVTAIATFSLPVYSI, and ILLFVFVLAATAFGLYGIILA.

It belongs to the GerABKA family.

The protein resides in the membrane. Its function is as follows. Contributes to the L-alanine germination response. This Bacillus cereus protein is Spore germination protein GerLA (gerLA).